The following is a 383-amino-acid chain: Trihelix transcription factor ASIL1 (383 aa).

4 disordered regions span residues M1 to N32, H61 to W94, I189 to G295, and E346 to S383. The segment covering T66 to G88 has biased composition (gly residues). The region spanning W94–K153 is the Myb-like domain. Over residues N206–Q225 the composition is skewed to polar residues. Basic and acidic residues predominate over residues Q226 to R235. A Bipartite nuclear localization signal motif is present at residues K228–R241. A compositionally biased stretch (acidic residues) spans T246–A262. The span at E263 to L274 shows a compositional bias: low complexity. Residues F304 to R365 are a coiled coil. Over residues E356–V367 the composition is skewed to basic and acidic residues.

It is found in the nucleus. Its function is as follows. Transcription repressor that binds specific DNA sequence such as the GT-box-like motif 5'-CGTGATT-3' in the AT2S3 promoter. Negative regulator of seed maturation genes during seed germination and seedling development. May target GT-box-containing embryonic genes by competing with the binding of transcriptional activators to this promoter region. Contributes to the maintenance and control of seed filling and may repress the maturation program during early embryogenesis. This chain is Trihelix transcription factor ASIL1, found in Arabidopsis thaliana (Mouse-ear cress).